A 276-amino-acid chain; its full sequence is Putative aliphatic sulfonates transport permease protein SsuC (276 aa).

7 helical membrane passes run 32-52, 54-74, 87-107, 119-141, 146-168, 199-219, and 242-262; these read GLLL…LGVV, ATVL…ILSG, AALG…LAGF, LQML…FGFD, ILLI…IRGV, ILLG…VAEL, and VFAG…FVRL. Positions 80 to 260 constitute an ABC transmembrane type-1 domain; the sequence is LQISIYRAAL…VVGKLTDSFV (181 aa).

This sequence belongs to the binding-protein-dependent transport system permease family. CysTW subfamily.

It localises to the cell membrane. Its function is as follows. Part of a binding-protein-dependent transport system for aliphatic sulfonates. Probably responsible for the translocation of the substrate across the membrane. The protein is Putative aliphatic sulfonates transport permease protein SsuC (ssuC) of Bacillus subtilis (strain 168).